The sequence spans 254 residues: Trans-aconitate 2-methyltransferase (254 aa).

It belongs to the methyltransferase superfamily. Tam family.

Its subcellular location is the cytoplasm. It carries out the reaction trans-aconitate + S-adenosyl-L-methionine = (E)-3-(methoxycarbonyl)pent-2-enedioate + S-adenosyl-L-homocysteine. Catalyzes the S-adenosylmethionine monomethyl esterification of trans-aconitate. The chain is Trans-aconitate 2-methyltransferase from Rhodococcus jostii (strain RHA1).